We begin with the raw amino-acid sequence, 2299 residues long: Acetyl-CoA carboxylase dmxL1 (2299 aa).

A compositionally biased stretch (low complexity) spans 21–39; sequence TSIPASVPASAPPSSSAPH. The disordered stretch occupies residues 21 to 41; sequence TSIPASVPASAPPSSSAPHAA. One can recognise a Biotin carboxylation domain in the interval 75-583; the sequence is VITNVLIANN…TTGWLDELIT (509 aa). In terms of domain architecture, ATP-grasp 1 spans 227 to 424; that stretch reads QVAIDADGIV…LPAAQLQIAM (198 aa). Position 258 to 315 (258 to 315) interacts with ATP; sequence AKEIGFPVMIKASEGGGGKGIRKCEQEEGFEALYNAASSEIPGSPIFIMKLAGNARHL. Glu-381, Glu-395, and Asn-397 together coordinate Mg(2+). Residues Glu-381, Glu-395, and Asn-397 each contribute to the Mn(2+) site. Positions 710-784 constitute a Biotinyl-binding domain; the sequence is LEQENDPTQL…EPGDVLGILT (75 aa). At Lys-751 the chain carries N6-biotinyllysine. Residues 1159–1208 form a disordered region; sequence DMEMSSQLSTPSTPATPPTPPYENGKQSKGVGSISDMSNLIENPDKEPTR. A CoA carboxyltransferase N-terminal domain is found at 1539–1887; the sequence is PTKALEWLQP…KKNTLVPIGP (349 aa). Residues 1891–2205 enclose the CoA carboxyltransferase C-terminal domain; that stretch reads PWDRDIVCSP…EEHILKRIAT (315 aa).

Requires biotin as cofactor. The cofactor is Mg(2+). Mn(2+) is required as a cofactor.

The enzyme catalyses hydrogencarbonate + acetyl-CoA + ATP = malonyl-CoA + ADP + phosphate + H(+). The catalysed reaction is N(6)-biotinyl-L-lysyl-[protein] + hydrogencarbonate + ATP = N(6)-carboxybiotinyl-L-lysyl-[protein] + ADP + phosphate + H(+). It functions in the pathway secondary metabolite biosynthesis. It participates in lipid metabolism; malonyl-CoA biosynthesis; malonyl-CoA from acetyl-CoA: step 1/1. Functionally, acetyl-CoA carboxylase; part of the gene cluster that mediates the biosynthesis of the dimeric xanthones cryptosporioptides. The pathway begins with the synthesis of atrochrysone thioester by the polyketide synthase dmx-nrPKS. The atrochrysone carboxyl ACP thioesterase dmxR1 then breaks the thioester bond and releases the atrochrysone carboxylic acid from dmx-nrPKS. Atrochrysone carboxylic acid is decarboxylated by the decarboxylase dmxR15, and oxidized by the anthrone oxygenase dmxR16 to yield emodin. Emodin is then reduced to emodin hydroquinone by the oxidoreductase dmxR7. A-ring reduction by the short chain dehydrogenase dmxR18, dehydration by the scytalone dehydratase-like protein dmxR17 and probable spontaneous re-oxidation, results in overall deoxygenation to chrysophanol. Baeyer-Villiger oxidation by the Baeyer-Villiger monooxygenase (BVMO) dmxR6 then yields monodictylactone in equilibrium with monodictyphenone. In the case of the cryptosporioptides biosynthesis, monodictylactone is reduced at C-12 to an alcohol (by the short chain dehydrogenases dmxR12 or dmxR8) and hydroxylated at C-5 by dmxR9, yielding the electron-rich aromatic which could eliminate H(2)O to form the ortho-quinonemethide, followed by tautomerisation to paraquinone and complete the formal reduction to produce the 10-methylgroup. Conjugate addition of C-4a-OH to the resulting paraquinone by the monooxygenase dmxR10 then gives cyclohexadienone, which is then reduced at C-5 by the short chain dehydrogenase dmxR3 to give the dihydroxanthone. The 6,7-epoxide in the cryptosporioptides could be introduced by the cytochrome P450 monooxygenase dmxL3. The highly reducing PKS dmxL2 manufactures butyrate, which is further carboxylated by dmxL1 to form ethylmalonate. It is not yet clear whether the carboxylation occurs while the butyrate is attached to the ACP of dmxL2, but this unusual fungal metabolite could then be esterified to O-5 by the O-acetyltransferase dmxR13. Finally, dimerization performed by dmxR5 gives the observed dimers cryptosporioptides A, B and C as the final products of the pathway. The chain is Acetyl-CoA carboxylase dmxL1 from Cryptosporiopsis sp. (strain 8999).